We begin with the raw amino-acid sequence, 261 residues long: tRNA 5-carboxymethoxyuridine methyltransferase (261 aa).

Residues Arg-26, 52-53 (GG), Asp-73, 102-103 (AQ), and His-119 each bind S-adenosyl-L-methionine.

Belongs to the class I-like SAM-binding methyltransferase superfamily. CmoM family. In terms of assembly, homodimer.

The catalysed reaction is 5-carboxymethoxyuridine(34) in tRNA + S-adenosyl-L-methionine = 5-methoxycarbonylmethoxyuridine(34) in tRNA + S-adenosyl-L-homocysteine. Catalyzes the methylation of 5-carboxymethoxyuridine (cmo5U) to form 5-methoxycarbonylmethoxyuridine (mcmo5U) at position 34 in tRNAs. The chain is tRNA 5-carboxymethoxyuridine methyltransferase from Escherichia coli O157:H7.